Here is a 264-residue protein sequence, read N- to C-terminus: Rano class II histocompatibility antigen, D-1 beta chain (264 aa).

A signal peptide spans 1 to 26 (MVWLARDSCVAAVILLLTVLSPPVAL). The segment at 27–120 (VRDPTPRFLE…EISESFLVPR (94 aa)) is beta-1. The Extracellular segment spans residues 27-226 (VRDPTPRFLE…AQSTSAQNKK (200 aa)). 2 disulfide bridges follow: Cys-42–Cys-106 and Cys-144–Cys-200. Asn-46 carries N-linked (GlcNAc...) asparagine glycosylation. Residues 121-215 (TVEPKVTVYP…SLPSPVRVEW (95 aa)) form a beta-2 region. An Ig-like C1-type domain is found at 124–228 (PKVTVYPSKT…STSAQNKKMS (105 aa)). The interval 216 to 226 (KAQSTSAQNKK) is connecting peptide. A helical membrane pass occupies residues 227-248 (MSGVGGIVLGLLFLGAGLFVYF). Residues 249 to 264 (RNQKGQSGLQPTGLLN) lie on the Cytoplasmic side of the membrane.

It belongs to the MHC class II family.

The protein localises to the membrane. Its function is as follows. Involved in the presentation of foreign antigens to the immune system. The protein is Rano class II histocompatibility antigen, D-1 beta chain (RT1-Db1) of Rattus norvegicus (Rat).